A 635-amino-acid chain; its full sequence is Ligand-gated ion channel 4 (635 aa).

A signal peptide spans 1–24 (MIICYSCLTVSILLTIKFVPCRFA). At 25–324 (GIEHQNTKSR…IHMHRRPLFY (300 aa)) the chain is on the extracellular side. Residues N46, N139, N177, and N225 are each glycosylated (N-linked (GlcNAc...) asparagine). A disulfide bond links C238 and C252. An N-linked (GlcNAc...) asparagine glycan is attached at N282. 3 consecutive transmembrane segments (helical) span residues 325–345 (VFNH…GFLM), 355–375 (MIIT…ESIP), and 381–401 (VPLI…ATCV). The Cytoplasmic portion of the chain corresponds to 402-599 (NVITLNMHRN…QQLASVVDRL (198 aa)). Residues 600-620 (LLCLFCTATLFTIICLLIVPV) traverse the membrane as a helical segment. The N-linked (GlcNAc...) asparagine glycan is linked to N625.

It belongs to the ligand-gated ion channel (TC 1.A.9) family.

The protein localises to the postsynaptic cell membrane. The protein resides in the cell membrane. Possible acetylcholine receptor. The chain is Ligand-gated ion channel 4 (lgc-4) from Caenorhabditis elegans.